The following is a 323-amino-acid chain: Lipoyl synthase (323 aa).

Residues C61, C66, C72, C87, C91, C94, and S300 each contribute to the [4Fe-4S] cluster site. In terms of domain architecture, Radical SAM core spans 73-289; sequence WDKKHATFMI…ETVAYSKGFL (217 aa).

It belongs to the radical SAM superfamily. Lipoyl synthase family. The cofactor is [4Fe-4S] cluster.

The protein resides in the cytoplasm. It catalyses the reaction [[Fe-S] cluster scaffold protein carrying a second [4Fe-4S](2+) cluster] + N(6)-octanoyl-L-lysyl-[protein] + 2 oxidized [2Fe-2S]-[ferredoxin] + 2 S-adenosyl-L-methionine + 4 H(+) = [[Fe-S] cluster scaffold protein] + N(6)-[(R)-dihydrolipoyl]-L-lysyl-[protein] + 4 Fe(3+) + 2 hydrogen sulfide + 2 5'-deoxyadenosine + 2 L-methionine + 2 reduced [2Fe-2S]-[ferredoxin]. Its pathway is protein modification; protein lipoylation via endogenous pathway; protein N(6)-(lipoyl)lysine from octanoyl-[acyl-carrier-protein]: step 2/2. Catalyzes the radical-mediated insertion of two sulfur atoms into the C-6 and C-8 positions of the octanoyl moiety bound to the lipoyl domains of lipoate-dependent enzymes, thereby converting the octanoylated domains into lipoylated derivatives. The chain is Lipoyl synthase from Rhizobium etli (strain ATCC 51251 / DSM 11541 / JCM 21823 / NBRC 15573 / CFN 42).